Reading from the N-terminus, the 347-residue chain is Lipoyl synthase (347 aa).

The [4Fe-4S] cluster site is built by Cys77, Cys82, Cys88, Cys103, Cys107, Cys110, and Ser317. Residues 89-306 form the Radical SAM core domain; it reads FADGTATFMI…MDYGKKIGFF (218 aa).

The protein belongs to the radical SAM superfamily. Lipoyl synthase family. It depends on [4Fe-4S] cluster as a cofactor.

It localises to the cytoplasm. It carries out the reaction [[Fe-S] cluster scaffold protein carrying a second [4Fe-4S](2+) cluster] + N(6)-octanoyl-L-lysyl-[protein] + 2 oxidized [2Fe-2S]-[ferredoxin] + 2 S-adenosyl-L-methionine + 4 H(+) = [[Fe-S] cluster scaffold protein] + N(6)-[(R)-dihydrolipoyl]-L-lysyl-[protein] + 4 Fe(3+) + 2 hydrogen sulfide + 2 5'-deoxyadenosine + 2 L-methionine + 2 reduced [2Fe-2S]-[ferredoxin]. It participates in protein modification; protein lipoylation via endogenous pathway; protein N(6)-(lipoyl)lysine from octanoyl-[acyl-carrier-protein]: step 2/2. Its function is as follows. Catalyzes the radical-mediated insertion of two sulfur atoms into the C-6 and C-8 positions of the octanoyl moiety bound to the lipoyl domains of lipoate-dependent enzymes, thereby converting the octanoylated domains into lipoylated derivatives. The sequence is that of Lipoyl synthase from Psychrobacter arcticus (strain DSM 17307 / VKM B-2377 / 273-4).